A 444-amino-acid chain; its full sequence is ATP-dependent protease ATPase subunit HslU (444 aa).

Residues Ile-20 and 62–67 contribute to the ATP site; that span reads GVGKTE. The tract at residues 130–158 is disordered; the sequence is EDRILDALVPPPRGASGEPERGEDNSARQ. Residues Asp-257, Glu-322, and Arg-394 each coordinate ATP.

This sequence belongs to the ClpX chaperone family. HslU subfamily. In terms of assembly, a double ring-shaped homohexamer of HslV is capped on each side by a ring-shaped HslU homohexamer. The assembly of the HslU/HslV complex is dependent on binding of ATP.

Its subcellular location is the cytoplasm. ATPase subunit of a proteasome-like degradation complex; this subunit has chaperone activity. The binding of ATP and its subsequent hydrolysis by HslU are essential for unfolding of protein substrates subsequently hydrolyzed by HslV. HslU recognizes the N-terminal part of its protein substrates and unfolds these before they are guided to HslV for hydrolysis. This chain is ATP-dependent protease ATPase subunit HslU, found in Bordetella bronchiseptica (strain ATCC BAA-588 / NCTC 13252 / RB50) (Alcaligenes bronchisepticus).